A 65-amino-acid polypeptide reads, in one-letter code: DNA gyrase inhibitor YacG (65 aa).

Residues Cys-10, Cys-13, Cys-29, and Cys-33 each contribute to the Zn(2+) site. Residues 45-65 (EKAIPGAPDMSDSDGWSEDQY) are disordered. The segment covering 55–65 (SDSDGWSEDQY) has biased composition (acidic residues).

The protein belongs to the DNA gyrase inhibitor YacG family. Interacts with GyrB. Requires Zn(2+) as cofactor.

In terms of biological role, inhibits all the catalytic activities of DNA gyrase by preventing its interaction with DNA. Acts by binding directly to the C-terminal domain of GyrB, which probably disrupts DNA binding by the gyrase. This chain is DNA gyrase inhibitor YacG, found in Vibrio cholerae serotype O1 (strain ATCC 39315 / El Tor Inaba N16961).